The chain runs to 307 residues: MATH domain and coiled-coil domain-containing protein At3g58380 (307 aa).

The MATH domain maps to 6–132 (DKKFVWVIKD…CREITIVIEV (127 aa)). Residues 238–290 (KVDWLEKKLKEVKEKKKNVDNGKARLQQIEEDLQKLNQKRLDLKDILDKEKAN) adopt a coiled-coil conformation.

The sequence is that of MATH domain and coiled-coil domain-containing protein At3g58380 from Arabidopsis thaliana (Mouse-ear cress).